The sequence spans 196 residues: Gastrula zinc finger protein XlCGF8.2DB (196 aa).

7 C2H2-type zinc fingers span residues 6–28, 34–56, 62–84, 90–112, 118–140, 146–168, and 174–196; these read FTCK…MTIH, FSCT…LTIH, FPCT…MKIH, FTCT…LKIH, FSCT…MKIH, FTCT…LKMH, and FTCT…MKIH.

Belongs to the krueppel C2H2-type zinc-finger protein family.

The protein resides in the nucleus. In terms of biological role, may be involved in transcriptional regulation. This Xenopus laevis (African clawed frog) protein is Gastrula zinc finger protein XlCGF8.2DB.